The sequence spans 558 residues: T-complex protein 1 subunit gamma (558 aa).

A disulfide bridge links C381 with C387.

The protein belongs to the TCP-1 chaperonin family. In terms of assembly, heterooligomeric complex of about 850 to 900 kDa that forms two stacked rings, 12 to 16 nm in diameter.

The protein localises to the cytoplasm. Molecular chaperone; assists the folding of proteins upon ATP hydrolysis. Known to play a role, in vitro, in the folding of actin and tubulin. This Thalassiosira weissflogii (Marine diatom) protein is T-complex protein 1 subunit gamma.